We begin with the raw amino-acid sequence, 254 residues long: MKIKVYSLEGEAIDEMELPEIFNEEFRPDVIKRAVLSAQTARVQPWGPDPMAGKRTSAQSYGAGRGVAMVPRIKNGSRAAFVPQAVGGRRAHPPRPQKNYHERINRKERRLAIRSAVAATARKDLVEARGHRIENVPQLPLVVDDELSMIKRTADTREVFRKLGIMDDIVRAREGKKIRAGKGKMRGRKYRTPRGPLIVVGDDKGITRGARNHPGVDVVRVENLNAELLAPGTHPGRLTVFTRSAIEKLDELFQ.

It belongs to the universal ribosomal protein uL4 family. As to quaternary structure, part of the 50S ribosomal subunit.

In terms of biological role, one of the primary rRNA binding proteins, this protein initially binds near the 5'-end of the 23S rRNA. It is important during the early stages of 50S assembly. It makes multiple contacts with different domains of the 23S rRNA in the assembled 50S subunit and ribosome. Its function is as follows. Forms part of the polypeptide exit tunnel. This Methanothermobacter thermautotrophicus (strain ATCC 29096 / DSM 1053 / JCM 10044 / NBRC 100330 / Delta H) (Methanobacterium thermoautotrophicum) protein is Large ribosomal subunit protein uL4.